The following is a 205-amino-acid chain: Homeobox protein goosecoid-2 (205 aa).

Disordered stretches follow at residues 33-58 and 185-205; these read SLPA…EPGA and KRAS…KGSC. Positions 126-185 form a DNA-binding region, homeobox; it reads TRRHRTIFSEEQLQALEALFVQNQYPDVSTRERLAGRIRLREERVEVWFKNRRAKWRHQK.

The protein belongs to the paired homeobox family. Bicoid subfamily. As to expression, detected in adult testis and pituitary, and in 9-10 week fetal tissue (thorax). Probably expressed in other tissues at low levels.

It is found in the nucleus. In terms of biological role, may have a role in development. May regulate its own transcription. May bind the bicoid consensus sequence TAATCC. The protein is Homeobox protein goosecoid-2 (GSC2) of Homo sapiens (Human).